A 372-amino-acid polypeptide reads, in one-letter code: MENFAEKKISKPLTFGEGIQYVLDRISIKPEDRQTFKEDAQQIQNEFVRAISKQDPYFASAFRGLALTGSSLDNVRINLPDEFDMLTKIKMPCKLEPVPIRSHPGYVFLRASGDNIPIHLVDRWEDEYCIDRLKVQAWFRDNITAVIPELSNIRCNDGRSYELVNKTIGDVAHTIQAKCLSDPDRSISFDFVPAFEFSASEWPRIFPQHRNEDRSWYAVPSEFKYPNVGDDPLSFLVCAPYWERMVLTKKQHLKDGYRLMKAMRDANDMPKIYSYTIKSVFLNASNVNKLINWNQSPGRILIRAIDLLAMFLRKGKLPSYLVPDRNMLDRLSVDMRQDYRRKLCHIFRRLIRCRDRDCMTSEDLQFIFGMRY.

T68 provides a ligand contact to GTP. ATP-binding positions include S70 and 82–84 (EFD). 3 residues coordinate Mg(2+): E82, D84, and D190. GTP is bound by residues D190 and 236–243 (LVCAPYWE). Residues 240–243 (PYWE), K261, and 274–278 (SYTIK) contribute to the ATP site.

The protein belongs to the mab-21 family. Requires Mg(2+) as cofactor. It depends on Mn(2+) as a cofactor.

The catalysed reaction is GTP + ATP = 3',2'-cGAMP + 2 diphosphate. It carries out the reaction GTP + ATP = pppA(2'-5')pG + diphosphate. It catalyses the reaction pppA(2'-5')pG = 3',2'-cGAMP + diphosphate. Its activity is regulated as follows. The enzyme activity is specifically activated by double-stranded RNA (dsRNA). Nucleotidyltransferase that catalyzes the formation of cyclic GMP-AMP (3',2'-cGAMP) from ATP and GTP and plays a key role in innate immunity. Synthesizes 3',2'-cGAMP in a two-step reaction through production of the linear intermediate pppA(2'-5')pG. Acts as a key sensor of double-stranded RNA (dsRNA), the presence of dsRNA in the cytoplasm being a danger signal that triggers the immune responses. Directly binds dsRNA longer than 15 bp, activating the nucleotidyltransferase activity, leading to synthesis of 3',2'-cGAMP, a second messenger that binds to and activates Sting, thereby triggering the antiviral immune response via activation of the NF-kappa-B transcription factor Rel (Relish). This Drosophila eugracilis (Fruit fly) protein is Cyclic GMP-AMP synthase-like receptor.